Reading from the N-terminus, the 31-residue chain is Ranatuerin-2 (31 aa).

An intrachain disulfide couples cysteine 23 to cysteine 28.

It belongs to the frog skin active peptide (FSAP) family. Ranatuerin subfamily. Expressed by the skin glands.

The protein resides in the secreted. Functionally, antibacterial activity against Gram-positive bacterium S.aureus (MIC=60 uM). Shows no detectable hemolytic activity towards human erythrocytes. This is Ranatuerin-2 from Aquarana catesbeiana (American bullfrog).